The following is a 596-amino-acid chain: Fructan 1-exohydrolase w2 (596 aa).

A signal peptide spans Met-1–Ser-20. Asp-75 is an active-site residue. N-linked (GlcNAc...) asparagine glycans are attached at residues Asn-168, Asn-236, and Asn-248. The cysteines at positions 446 and 492 are disulfide-linked. Asn-567 is a glycosylation site (N-linked (GlcNAc...) asparagine).

Belongs to the glycosyl hydrolase 32 family.

The enzyme catalyses Hydrolysis of terminal, non-reducing (2-&gt;1)-linked beta-D-fructofuranose residues in fructans.. Inhibited by sucrose. Functionally, hydrolyzes inulin-type beta-(2,1)-fructans, but not beta-(2,1)-linkages in branched fructans. Has low activity against beta-(2,6)-linked fructans. May play a role as a beta-(2,1)-trimmer during graminan biosynthesis. The sequence is that of Fructan 1-exohydrolase w2 from Triticum aestivum (Wheat).